Consider the following 541-residue polypeptide: Membrane protein insertase YidC (541 aa).

The next 5 helical transmembrane spans lie at 6–26 (NILLIGLLFVSFLLWQQWQAD), 349–369 (FVGNWGVAIILITLTVRGLLF), 420–440 (GGCLPILLQMPIFIALYWVLL), 457–477 (LSVQDPYYILPLLMGVSMFVM), and 500–520 (VIFTVFFLWFPSGLVLYWLVG).

The protein belongs to the OXA1/ALB3/YidC family. Type 1 subfamily. As to quaternary structure, interacts with the Sec translocase complex via SecD. Specifically interacts with transmembrane segments of nascent integral membrane proteins during membrane integration.

The protein localises to the cell inner membrane. Required for the insertion and/or proper folding and/or complex formation of integral membrane proteins into the membrane. Involved in integration of membrane proteins that insert both dependently and independently of the Sec translocase complex, as well as at least some lipoproteins. Aids folding of multispanning membrane proteins. In Shewanella sp. (strain MR-7), this protein is Membrane protein insertase YidC.